The sequence spans 750 residues: Photosystem I P700 chlorophyll a apoprotein A1 (750 aa).

Helical transmembrane passes span 70–93, 156–179, 195–219, 291–309, 346–369, 385–411, 433–455, and 531–549; these read VFSAHFGQLSIIFLWLSGMYFHGA, LYCTAIGALVFAALMLFAGWFHYH, LNHHLAGLLGLGSLSWAGHQVHVSL, IAHHHLAIAILFLIAGHMY, WHAQLSLNLAMLGSLTIVVAHHMY, LSLFTHHMWIGGFLIVGAAAHAAIFMV, AIISHLNWVCIFLGFHSFGLYIH, and FLVHHIHAFTIHVTVLILL. [4Fe-4S] cluster-binding residues include Cys573 and Cys582. 2 consecutive transmembrane segments (helical) span residues 589–610 and 664–686; these read HVFLGLFWMYNAISVVIFHFSW and LSAYGLFFLGAHFVWAFSLMFLF. Residue His675 participates in chlorophyll a' binding. Chlorophyll a-binding residues include Met683 and Tyr691. Trp692 provides a ligand contact to phylloquinone. The chain crosses the membrane as a helical span at residues 724–744; it reads AVGVTHYLLGGIATTWAFFLA.

This sequence belongs to the PsaA/PsaB family. As to quaternary structure, the PsaA/B heterodimer binds the P700 chlorophyll special pair and subsequent electron acceptors. PSI consists of a core antenna complex that captures photons, and an electron transfer chain that converts photonic excitation into a charge separation. The eukaryotic PSI reaction center is composed of at least 11 subunits. P700 is a chlorophyll a/chlorophyll a' dimer, A0 is one or more chlorophyll a, A1 is one or both phylloquinones and FX is a shared 4Fe-4S iron-sulfur center. serves as cofactor.

The protein resides in the plastid. Its subcellular location is the chloroplast thylakoid membrane. The catalysed reaction is reduced [plastocyanin] + hnu + oxidized [2Fe-2S]-[ferredoxin] = oxidized [plastocyanin] + reduced [2Fe-2S]-[ferredoxin]. In terms of biological role, psaA and PsaB bind P700, the primary electron donor of photosystem I (PSI), as well as the electron acceptors A0, A1 and FX. PSI is a plastocyanin-ferredoxin oxidoreductase, converting photonic excitation into a charge separation, which transfers an electron from the donor P700 chlorophyll pair to the spectroscopically characterized acceptors A0, A1, FX, FA and FB in turn. Oxidized P700 is reduced on the lumenal side of the thylakoid membrane by plastocyanin. In Lobularia maritima (Sweet alyssum), this protein is Photosystem I P700 chlorophyll a apoprotein A1.